A 437-amino-acid polypeptide reads, in one-letter code: GTPase Der (437 aa).

EngA-type G domains are found at residues 3–167 and 176–352; these read NLVA…NKET and PRFA…ENRT. GTP is bound by residues 9 to 16, 56 to 60, 119 to 122, 182 to 189, 229 to 233, and 294 to 297; these read GRPNVGKS, DTGGW, NKTD, GRPNAGKS, DTAGI, and NKWD. The KH-like domain occupies 353–437; sequence TKIPTARLNE…TPINIYIRQK (85 aa).

The protein belongs to the TRAFAC class TrmE-Era-EngA-EngB-Septin-like GTPase superfamily. EngA (Der) GTPase family. As to quaternary structure, associates with the 50S ribosomal subunit.

GTPase that plays an essential role in the late steps of ribosome biogenesis. This is GTPase Der from Bacteroides thetaiotaomicron (strain ATCC 29148 / DSM 2079 / JCM 5827 / CCUG 10774 / NCTC 10582 / VPI-5482 / E50).